Reading from the N-terminus, the 599-residue chain is Elongation factor 4 (599 aa).

Residues 2–184 (KNIRNFSIIA…RLVRDIPPPE (183 aa)) form the tr-type G domain. Residues 14–19 (DHGKST) and 131–134 (NKID) each bind GTP.

It belongs to the TRAFAC class translation factor GTPase superfamily. Classic translation factor GTPase family. LepA subfamily.

Its subcellular location is the cell inner membrane. The enzyme catalyses GTP + H2O = GDP + phosphate + H(+). Its function is as follows. Required for accurate and efficient protein synthesis under certain stress conditions. May act as a fidelity factor of the translation reaction, by catalyzing a one-codon backward translocation of tRNAs on improperly translocated ribosomes. Back-translocation proceeds from a post-translocation (POST) complex to a pre-translocation (PRE) complex, thus giving elongation factor G a second chance to translocate the tRNAs correctly. Binds to ribosomes in a GTP-dependent manner. This Shigella dysenteriae serotype 1 (strain Sd197) protein is Elongation factor 4.